We begin with the raw amino-acid sequence, 227 residues long: Orotate phosphoribosyltransferase (227 aa).

Lys26 serves as a coordination point for 5-phospho-alpha-D-ribose 1-diphosphate. 34-35 (FF) contributes to the orotate binding site. Residues 72 to 73 (YK), Arg98, Lys99, Lys102, His104, and 123 to 131 (DDVVSAGLS) contribute to the 5-phospho-alpha-D-ribose 1-diphosphate site. Orotate is bound by residues Ser127 and Arg155.

This sequence belongs to the purine/pyrimidine phosphoribosyltransferase family. PyrE subfamily. In terms of assembly, homodimer. Mg(2+) is required as a cofactor.

It carries out the reaction orotidine 5'-phosphate + diphosphate = orotate + 5-phospho-alpha-D-ribose 1-diphosphate. It functions in the pathway pyrimidine metabolism; UMP biosynthesis via de novo pathway; UMP from orotate: step 1/2. Functionally, catalyzes the transfer of a ribosyl phosphate group from 5-phosphoribose 1-diphosphate to orotate, leading to the formation of orotidine monophosphate (OMP). The protein is Orotate phosphoribosyltransferase of Nitrosomonas europaea (strain ATCC 19718 / CIP 103999 / KCTC 2705 / NBRC 14298).